A 273-amino-acid chain; its full sequence is Urease accessory protein UreD (273 aa).

The protein belongs to the UreD family. In terms of assembly, ureD, UreF and UreG form a complex that acts as a GTP-hydrolysis-dependent molecular chaperone, activating the urease apoprotein by helping to assemble the nickel containing metallocenter of UreC. The UreE protein probably delivers the nickel.

The protein localises to the cytoplasm. Functionally, required for maturation of urease via the functional incorporation of the urease nickel metallocenter. This Rhizobium etli (strain ATCC 51251 / DSM 11541 / JCM 21823 / NBRC 15573 / CFN 42) protein is Urease accessory protein UreD.